Here is a 515-residue protein sequence, read N- to C-terminus: 2-isopropylmalate synthase (515 aa).

Residues 5-267 (VIIFDTTLRD…HTSLKNDEIH (263 aa)) form the Pyruvate carboxyltransferase domain. 4 residues coordinate Mn(2+): aspartate 14, histidine 202, histidine 204, and asparagine 238. Residues 392 to 515 (KLNYLSVQSG…EIKQNKITTV (124 aa)) are regulatory domain.

Belongs to the alpha-IPM synthase/homocitrate synthase family. LeuA type 1 subfamily. Homodimer. The cofactor is Mn(2+).

The protein localises to the cytoplasm. It catalyses the reaction 3-methyl-2-oxobutanoate + acetyl-CoA + H2O = (2S)-2-isopropylmalate + CoA + H(+). It functions in the pathway amino-acid biosynthesis; L-leucine biosynthesis; L-leucine from 3-methyl-2-oxobutanoate: step 1/4. Catalyzes the condensation of the acetyl group of acetyl-CoA with 3-methyl-2-oxobutanoate (2-ketoisovalerate) to form 3-carboxy-3-hydroxy-4-methylpentanoate (2-isopropylmalate). This chain is 2-isopropylmalate synthase, found in Aliivibrio salmonicida (strain LFI1238) (Vibrio salmonicida (strain LFI1238)).